A 550-amino-acid polypeptide reads, in one-letter code: Hydroxylamine reductase (550 aa).

Residues C3, C6, C18, and C25 each coordinate [2Fe-2S] cluster. The hybrid [4Fe-2O-2S] cluster site is built by H249, E273, C317, C405, C433, C458, E492, and K494. C405 carries the cysteine persulfide modification.

The protein belongs to the HCP family. The cofactor is [2Fe-2S] cluster. It depends on hybrid [4Fe-2O-2S] cluster as a cofactor.

It localises to the cytoplasm. The enzyme catalyses A + NH4(+) + H2O = hydroxylamine + AH2 + H(+). In terms of biological role, catalyzes the reduction of hydroxylamine to form NH(3) and H(2)O. In Yersinia pseudotuberculosis serotype O:1b (strain IP 31758), this protein is Hydroxylamine reductase.